We begin with the raw amino-acid sequence, 427 residues long: O-methyltransferase FrzF (427 aa).

Asp-281 contributes to the S-adenosyl-L-methionine binding site. His-327 (proton acceptor) is an active-site residue.

The protein belongs to the class I-like SAM-binding methyltransferase superfamily. Cation-independent O-methyltransferase family. As to quaternary structure, homodimer.

The catalysed reaction is (1S,4S)-4-[(4-hydroxyphenyl)methyl]-2,5-diazaspiro[bicyclo[3.2.1]octane-6,1'-cyclohexan]-4'-one + S-adenosyl-L-methionine = (1S,4S)-4-[(4-methoxyphenyl)methyl]-2,5-diazaspiro[bicyclo[3.2.1]octane-6,1'-cyclohexan]-4'-one + S-adenosyl-L-homocysteine + H(+). It catalyses the reaction (1S,4S)-4-[(4-hydroxyphenyl)methyl]-2-methyl-2,5-diazaspiro[bicyclo[3.2.1]octane-6,1'-cyclohexan]-4'-one + S-adenosyl-L-methionine = (1S,4S)-4-[(4-methoxyphenyl)methyl]-2-methyl-2,5-diazaspiro[bicyclo[3.2.1]octane-6,1'-cyclohexan]-4'-one + S-adenosyl-L-homocysteine + H(+). Its pathway is secondary metabolite biosynthesis. In terms of biological role, O-methyltransferase; part of the gene cluster that mediates the biosynthesis of the alkaloid (-)-FR901483, a potent immunosuppressant that shows efficacy in animal models and a probable inhibitor of purine nucleotide biosynthesis by targeting phosphoribosylpyrophosphate amidotransferase (PPAT). Within the pathway, FrzF methylates the phenolic oxygen at position C4. The biosynthesis of (-)-FR901483 starts with the condensation of two L-tyrosines to yield (S,S)-dityrosyl-piperazine. This process occurs in 3 steps with the non-canonical nonribosomal peptide synthetase FrzA catalyzing the reduction of L-tyrosine into L-tyrosinal, the spontaneous condensation of 2 L-tyrosinal units, and the subsequent reduction by the NmrA-like family domain-containing oxidoreductase FrzB. The cytochrome P450 monooxygenase FrzC then performs coupling between N10 and C1' to morph the piperazine into a 1,4-diazabicyclo[3.2.1]octane spiro-fused to a 2,5-cyclohexadienone. The dienone portion is further reduced to cyclohexanone by the flavin-dependent reductase FrzD. The methyltranserases (MTs) FrzE and FrzF are then involved in the methylation at the C10' amine and the C4 phenolic oxygen, respectively. The order of the two MTs appear to be interchangeable. Cleavage of the C9-N10' bond by the dioxygenase FrzG then leads to formation of a conjugated iminium. In addition to the oxidation of C9, an additional dehydrogenation between C7 and C8 can occur to give a likely shunt product. The next biosynthetic step is the intramolecular aldol condensation catalyzed by the newly identified aldolase FrzH to yield an aza-tricyclic product with the formation of a C9-C3' bond. The short-chain dehydrogenase/reductase FrzI then produces dephospho-(-)-FR901483 that is phosphorylated at C4'-OH into (-)-FR901483 by the phosphotransferase FrzJ. This Cladobotryum sp protein is O-methyltransferase FrzF.